The primary structure comprises 59 residues: UPF0434 protein plu1633 (59 aa).

The protein belongs to the UPF0434 family.

The polypeptide is UPF0434 protein plu1633 (Photorhabdus laumondii subsp. laumondii (strain DSM 15139 / CIP 105565 / TT01) (Photorhabdus luminescens subsp. laumondii)).